The following is a 287-amino-acid chain: Phosphatidylserine decarboxylase proenzyme (287 aa).

Active-site charge relay system; for autoendoproteolytic cleavage activity residues include Asp-86, His-143, and Ser-250. Catalysis depends on Ser-250, which acts as the Schiff-base intermediate with substrate; via pyruvic acid; for decarboxylase activity. Ser-250 carries the pyruvic acid (Ser); by autocatalysis modification.

It belongs to the phosphatidylserine decarboxylase family. PSD-B subfamily. Prokaryotic type I sub-subfamily. As to quaternary structure, heterodimer of a large membrane-associated beta subunit and a small pyruvoyl-containing alpha subunit. Pyruvate serves as cofactor. Is synthesized initially as an inactive proenzyme. Formation of the active enzyme involves a self-maturation process in which the active site pyruvoyl group is generated from an internal serine residue via an autocatalytic post-translational modification. Two non-identical subunits are generated from the proenzyme in this reaction, and the pyruvate is formed at the N-terminus of the alpha chain, which is derived from the carboxyl end of the proenzyme. The autoendoproteolytic cleavage occurs by a canonical serine protease mechanism, in which the side chain hydroxyl group of the serine supplies its oxygen atom to form the C-terminus of the beta chain, while the remainder of the serine residue undergoes an oxidative deamination to produce ammonia and the pyruvoyl prosthetic group on the alpha chain. During this reaction, the Ser that is part of the protease active site of the proenzyme becomes the pyruvoyl prosthetic group, which constitutes an essential element of the active site of the mature decarboxylase.

It localises to the cell membrane. The catalysed reaction is a 1,2-diacyl-sn-glycero-3-phospho-L-serine + H(+) = a 1,2-diacyl-sn-glycero-3-phosphoethanolamine + CO2. The protein operates within phospholipid metabolism; phosphatidylethanolamine biosynthesis; phosphatidylethanolamine from CDP-diacylglycerol: step 2/2. Catalyzes the formation of phosphatidylethanolamine (PtdEtn) from phosphatidylserine (PtdSer). The polypeptide is Phosphatidylserine decarboxylase proenzyme (Wigglesworthia glossinidia brevipalpis).